The following is a 60-amino-acid chain: Small ribosomal subunit protein bS21 (60 aa).

It belongs to the bacterial ribosomal protein bS21 family.

The sequence is that of Small ribosomal subunit protein bS21 (rpsU) from Mycoplasma pneumoniae (strain ATCC 29342 / M129 / Subtype 1) (Mycoplasmoides pneumoniae).